Here is a 578-residue protein sequence, read N- to C-terminus: Hyaluronan synthase 1 (578 aa).

Residues 1–25 lie on the Cytoplasmic side of the membrane; sequence MRQQDAPKPTPAACRCSGLARRVLT. The helical transmembrane segment at 26–46 threads the bilayer; sequence IAFALLILGLMTWAYAAGVPL. Over 47–52 the chain is Extracellular; the sequence is ASDRYG. The chain crosses the membrane as a helical span at residues 53-73; that stretch reads LLAFGLYGAFLSAHLVAQSLF. At 74–399 the chain is on the cytoplasmic side; sequence AYLEHRRVAA…NALWWHRHHA (326 aa). Residues 400 to 420 traverse the membrane as a helical segment; sequence WMTYEAVVSGLFPFFVAATVL. Topologically, residues 421-430 are extracellular; that stretch reads RLFYAGRPWA. A helical membrane pass occupies residues 431–451; it reads LLWVLLCVQGVALAKAAFAAW. Residues 452 to 457 lie on the Cytoplasmic side of the membrane; that stretch reads LRGCLR. Residues 458-478 traverse the membrane as a helical segment; it reads MVLLSLYAPLYMCGLLPAKFL. Over 479-497 the chain is Extracellular; that stretch reads ALVTMNQSGWGTSGRRKLA. A helical transmembrane segment spans residues 498–518; sequence ANYVPLLPLALWALLLLGGLV. The Cytoplasmic segment spans residues 519-540; it reads RSVAHEARADWSGPSRAAEAYH. Residues 541–561 form a helical membrane-spanning segment; it reads LAAGAGAYVGYWVAMLTLYWV. Residues 562–578 lie on the Extracellular side of the membrane; it reads GVRRLCRRRTGGYRVQV.

It belongs to the NodC/HAS family. The cofactor is Mg(2+). As to expression, widely expressed. Highly expressed in ovary followed by spleen, thymus, prostate, testes and large intestine. Weakly expressed in small intestine.

It is found in the membrane. The catalysed reaction is [hyaluronan](n) + UDP-N-acetyl-alpha-D-glucosamine = N-acetyl-beta-D-glucosaminyl-(1-&gt;4)-[hyaluronan](n) + UDP + H(+). It catalyses the reaction N-acetyl-beta-D-glucosaminyl-(1-&gt;4)-[hyaluronan](n) + UDP-alpha-D-glucuronate = [hyaluronan](n+1) + UDP + H(+). It functions in the pathway glycan biosynthesis; hyaluronan biosynthesis. Functionally, catalyzes the addition of GlcNAc or GlcUA monosaccharides to the nascent hyaluronan polymer. Therefore, it is essential to hyaluronan synthesis a major component of most extracellular matrices that has a structural role in tissues architectures and regulates cell adhesion, migration and differentiation. This is one of the isozymes catalyzing that reaction. Also able to catalyze the synthesis of chito-oligosaccharide depending on the substrate. This chain is Hyaluronan synthase 1 (HAS1), found in Homo sapiens (Human).